We begin with the raw amino-acid sequence, 552 residues long: Glutamine--tRNA ligase (552 aa).

The 'HIGH' region motif lies at Pro34 to His44. ATP is bound by residues Glu35 to Asn37 and His41 to Ser47. L-glutamine contacts are provided by Asp67 and Tyr212. ATP contacts are provided by residues Thr231, Arg261–Leu262, and Met269–Lys271. A 'KMSKS' region motif is present at residues Val268–Arg272.

The protein belongs to the class-I aminoacyl-tRNA synthetase family. In terms of assembly, monomer.

The protein resides in the cytoplasm. It carries out the reaction tRNA(Gln) + L-glutamine + ATP = L-glutaminyl-tRNA(Gln) + AMP + diphosphate. This Aliivibrio fischeri (strain MJ11) (Vibrio fischeri) protein is Glutamine--tRNA ligase.